The primary structure comprises 439 residues: U1 small nuclear ribonucleoprotein 70 kDa (439 aa).

Thr2 is modified (N-acetylthreonine). Residues 48–79 (FEDPRDAPPPTRAETREERMERKRREKIERRQ) are disordered. Over residues 60 to 79 (AETREERMERKRREKIERRQ) the composition is skewed to basic and acidic residues. Positions 92–202 (HNDPNAQGDA…GGGLGGTRRG (111 aa)) are required for interaction with U1 RNA. The RRM domain occupies 103 to 181 (KTLFVARVNY…RRVLVDVERG (79 aa)). Lys118 is subject to N6-acetyllysine. Tyr126 is subject to Phosphotyrosine. Positions 187–439 (WRPRRLGGGL…NGYLMEAAPE (253 aa)) are disordered. A compositionally biased stretch (gly residues) spans 192-201 (LGGGLGGTRR). Residues 207–254 (NIRHSGRDDTSRYDERPGPSPLPHRDRDRDRERERRERSRERDKERER) are compositionally biased toward basic and acidic residues. Residues Ser226 and Ser268 each carry the phosphoserine modification. Residues 255-268 (RRSRSRDRRRRSRS) show a composition bias toward basic residues. Composition is skewed to basic and acidic residues over residues 269–286 (RDKEERRRSRERSKDKDR) and 294–310 (RSRERARRERERKEELR). Position 323 is a phosphoserine (Ser323). The span at 346–394 (PEEKGRDRDRDRRRSHRSERERRRDRDRDRDREHKRGERGGDRGRDEAR) shows a compositional bias: basic and acidic residues. Lys349 participates in a covalent cross-link: Glycyl lysine isopeptide (Lys-Gly) (interchain with G-Cter in SUMO2). The segment covering 395–410 (GGGGGGQDNGLEGLGN) has biased composition (gly residues).

In terms of assembly, component of the U1 snRNP. The U1 snRNP is composed of the U1 snRNA and the 7 core Sm proteins SNRPB, SNRPD1, SNRPD2, SNRPD3, SNRPE, SNRPF and SNRPG that assemble in a heptameric protein ring on the Sm site of the small nuclear RNA to form the core snRNP, and at least three U1 snRNP-specific proteins SNRNP70/U1-70K, SNRPA/U1-A and SNRPC/U1-C. Interacts with SCNM1. Found in a pre-mRNA splicing complex with SFRS4, SFRS5, SNRNP70, SNRPA1, SRRM1 and SRRM2. Found in a pre-mRNA exonic splicing enhancer (ESE) complex with SNRNP70, SNRPA1, SRRM1 and TRA2B/SFRS10. Interacts with dephosphorylated SFRS13A and SFPQ. Interacts with NUDT21/CPSF5, CPSF6, SCAF11, and ZRANB2. Interacts with GEMIN5. Interacts with FUS. Post-translationally, extensively phosphorylated on serine residues in the C-terminal region.

The protein resides in the nucleus speckle. It localises to the nucleus. Its subcellular location is the nucleoplasm. In terms of biological role, component of the spliceosomal U1 snRNP, which is essential for recognition of the pre-mRNA 5' splice-site and the subsequent assembly of the spliceosome. SNRNP70 binds to the loop I region of U1-snRNA. The chain is U1 small nuclear ribonucleoprotein 70 kDa (SNRNP70) from Bos taurus (Bovine).